The sequence spans 379 residues: MSEDESNSVSCSLSLESDGYSDEEYDTNLNKLIENESLNWIFVGGKGGVGKTTTSCSIAVQLSKRRESVLLLSTDPAHNTSDAFNQKFTNQPTLINSFDNLYCMEIDTNYSENTAFKLNKKEMFDNILPELLHSFPGIDEALCFAELMQSIKNMKYSVIVFDTAPTGHTLRLLAFPDLLKKALGYLINIREKLKGTLNVLKNFTNNEMEFDSLYEKINHLNAMSSSIQANFQNPMKTTFVCVCIPEFLSVYETERLIQELTKKNISCYNIVVNQVVFPLDSPNVNLENCKNLLSQIKNEQIQSYFNDLISKTEELEDVYISRRKLQSKYLTQIKNLYSNDFHIVCMPQLKNEIRGLNNISSFSEMLLQSKDIPIYKDNL.

The segment at Met-1–Tyr-20 is disordered. Positions Asn-7–Asp-18 are enriched in low complexity. Residue Lys-46–Thr-53 participates in ATP binding. Residue Asp-75 is part of the active site. Glu-246 and Asn-273 together coordinate ATP.

Belongs to the arsA ATPase family. Homodimer.

It is found in the cytoplasm. Its subcellular location is the endoplasmic reticulum. In terms of biological role, ATPase required for the post-translational delivery of tail-anchored (TA) proteins to the endoplasmic reticulum. Recognizes and selectively binds the transmembrane domain of TA proteins in the cytosol. This complex then targets to the endoplasmic reticulum by membrane-bound receptors, where the tail-anchored protein is released for insertion. This process is regulated by ATP binding and hydrolysis. ATP binding drives the homodimer towards the closed dimer state, facilitating recognition of newly synthesized TA membrane proteins. ATP hydrolysis is required for insertion. Subsequently, the homodimer reverts towards the open dimer state, lowering its affinity for the membrane-bound receptor, and returning it to the cytosol to initiate a new round of targeting. This chain is ATPase ASNA1 homolog, found in Plasmodium falciparum (isolate 3D7).